We begin with the raw amino-acid sequence, 354 residues long: Arginase-2, mitochondrial (354 aa).

The transit peptide at 1–22 (MFLRSSVSRLLHGQIPCALTRS) directs the protein to the mitochondrion. Residues His120, Asp143, His145, and Asp147 each coordinate Mn(2+). Residues 145–149 (HADIN), 156–158 (SGN), and Glu202 each bind substrate. Residues Asp251 and Asp253 each coordinate Mn(2+). Substrate contacts are provided by Thr265 and Glu296.

This sequence belongs to the arginase family. In terms of assembly, homotrimer. Requires Mn(2+) as cofactor.

The protein localises to the mitochondrion. The catalysed reaction is L-arginine + H2O = urea + L-ornithine. It participates in nitrogen metabolism; urea cycle; L-ornithine and urea from L-arginine: step 1/1. May play a role in the regulation of extra-urea cycle arginine metabolism and also in down-regulation of nitric oxide synthesis. Extrahepatic arginase functions to regulate L-arginine bioavailability to nitric oxid synthase (NOS). Arginine metabolism is a critical regulator of innate and adaptive immune responses. Seems to be involved in negative regulation of the survival capacity of activated T cells. May suppress inflammation-related signaling in asthmatic airway epithelium. May play a role in promoting prenatal immune suppression. Regulates RPS6KB1 signaling, which promotes endothelial cell senescence and inflammation and implicates NOS3/eNOS dysfunction. Can inhibit endothelial autophagy independently of its enzymatic activity implicating mTORC2 signaling. Involved in vascular smooth muscle cell senescence and apoptosis independently of its enzymatic activity. The protein is Arginase-2, mitochondrial (Arg2) of Rattus norvegicus (Rat).